The chain runs to 703 residues: Pentatricopeptide repeat-containing protein At1g22830 (703 aa).

PPR repeat units lie at residues Val-82 to Phe-116, Asp-117 to Leu-147, His-148 to Ala-182, Asp-183 to Cys-217, Asn-218 to Arg-248, Asp-249 to Ala-283, Ser-284 to Ile-318, Gly-319 to Ser-353, Ile-356 to Asn-386, Ser-387 to Pro-421, Asn-422 to Arg-452, Cys-458 to Arg-488, Asp-489 to Pro-523, Asp-524 to Val-554, and Arg-560 to Ala-594. The tract at residues Met-595–Asp-671 is type E motif. Positions Asp-671–Gly-703 are disordered.

This sequence belongs to the PPR family. PCMP-E subfamily.

In Arabidopsis thaliana (Mouse-ear cress), this protein is Pentatricopeptide repeat-containing protein At1g22830 (PCMP-E24).